The following is a 772-amino-acid chain: Acyl-homoserine lactone acylase PvdQ (772 aa).

Positions 1–28 (MPVFPFCRPMTCAGLAAALVAFSVGVQA) are cleaved as a signal peptide. The propeptide at 199 to 220 (AQSSAGFASALARQERFAAERG) is spacer peptide. The active-site Nucleophile is the Ser-221.

It belongs to the peptidase S45 family. As to quaternary structure, heterodimer of an alpha subunit and a beta subunit processed from the same precursor.

Its subcellular location is the periplasm. The enzyme catalyses an N-acyl-L-homoserine lactone + H2O = L-homoserine lactone + a carboxylate. Functionally, catalyzes the deacylation of acyl-homoserine lactone (AHL or acyl-HSL), releasing homoserine lactone (HSL) and the corresponding fatty acid. Possesses a specificity for the degradation of long-chain acyl-HSLs (side chains of 11 to 14 carbons in length). The sequence is that of Acyl-homoserine lactone acylase PvdQ (pvdQ) from Pseudomonas putida (strain ATCC 47054 / DSM 6125 / CFBP 8728 / NCIMB 11950 / KT2440).